Consider the following 386-residue polypeptide: CUE domain-containing protein 1 (386 aa).

Low complexity predominate over residues 1–10 (MTSLFRRSSS). The disordered stretch occupies residues 1-40 (MTSLFRRSSSGSGGGGTAGARGGGGGTAAPQELNNSRPAR). The span at 11–27 (GSGGGGTAGARGGGGGT) shows a compositional bias: gly residues. A CUE domain is found at 46 to 89 (EFNQAMDDFKTMFPNMDYDIIECVLRANSGAVDATIDQLLQMNL). Disordered regions lie at residues 147–172 (LAPPTPPPRIDALGSGAPTSQRRYRN), 195–225 (SIQGNAGGPKPGSGEGCPPAMAGPGPGDQES), and 367–386 (DFRGRRQEAPKVEEGLREGQ). Over residues 199 to 209 (NAGGPKPGSGE) the composition is skewed to gly residues.

In Homo sapiens (Human), this protein is CUE domain-containing protein 1 (CUEDC1).